Reading from the N-terminus, the 356-residue chain is MKKKVLVGMSGGVDSSVAAYLLKEQGYEVIGVTMQIWQDDEEFIEKEGGCCSLSAVADARRVANKIGIPFYVMNFKDAFKRNVIDYFVDEYMEGRTPNPCIACNKFIKFSSFLDKAMAMGIDYVATGHYAIIEKHNDRYIIKKSEDDKKDQTYALYNLTQFQLERTLMPCGQYKKSKIREIAKEIGLRVHNKKDSEEICFIPDNDHGRYIKNRFPNKVREGNFVDKQGSILGTHKGIVYYTIGQRKGLGIAFGKPMYVVDINPFRNEVVLGDLEDLLNTELIAKDTNYIPFDTLKEPMEVEAKIRYSQTPSKAIITPIEDGRVRVNFHEKQRAITKGQSVVFYKDDLLIGGGIIEK.

ATP-binding positions include 8-15 (GMSGGVDS) and methionine 34. Residue cysteine 103 is the Nucleophile of the active site. Cysteines 103 and 199 form a disulfide. Residue glycine 127 coordinates ATP. The tract at residues 149–151 (KDQ) is interaction with tRNA. Cysteine 199 (cysteine persulfide intermediate) is an active-site residue. Positions 305–306 (RY) are interaction with tRNA.

This sequence belongs to the MnmA/TRMU family.

The protein localises to the cytoplasm. The enzyme catalyses S-sulfanyl-L-cysteinyl-[protein] + uridine(34) in tRNA + AH2 + ATP = 2-thiouridine(34) in tRNA + L-cysteinyl-[protein] + A + AMP + diphosphate + H(+). Catalyzes the 2-thiolation of uridine at the wobble position (U34) of tRNA, leading to the formation of s(2)U34. The protein is tRNA-specific 2-thiouridylase MnmA 1 of Clostridium botulinum (strain Langeland / NCTC 10281 / Type F).